A 231-amino-acid polypeptide reads, in one-letter code: Achaete-scute homolog 1 (231 aa).

Disordered stretches follow at residues 1–24 and 39–92; these read MESSGKMESGAGQQPQPPQPFLPP and AAAA…PELM. A compositionally biased stretch (low complexity) spans 39–51; the sequence is AAAAAQSAQQQQP. The span at 76–85 shows a compositional bias: basic residues; sequence SAAKQVKRQR. The 53-residue stretch at 113–165 folds into the bHLH domain; sequence AAVARRNERERNRVKLVNLGFATLREHVPNGAANKKMSKVETLRSAVEYIRAL. Lys-151 carries the post-translational modification N6-acetyllysine.

In terms of assembly, efficient DNA binding requires dimerization with another bHLH protein. Forms a heterodimer with TCF3. In terms of tissue distribution, developing CNS and PNS at embryonic and postnatal stages. Expressed in the epithelium of glandular stomach.

It is found in the nucleus. In terms of biological role, transcription factor that plays a key role in neuronal differentiation: acts as a pioneer transcription factor, accessing closed chromatin to allow other factors to bind and activate neural pathways. Directly binds the E box motif (5'-CANNTG-3') on promoters and promotes transcription of neuronal genes. The combination of three transcription factors, ASCL1, POU3F2/BRN2 and MYT1L, is sufficient to reprogram fibroblasts and other somatic cells into induced neuronal (iN) cells in vitro. Plays a role at early stages of development of specific neural lineages in most regions of the CNS, and of several lineages in the PNS. Essential for the generation of olfactory and autonomic neurons. Acts synergistically with FOXN4 to specify the identity of V2b neurons rather than V2a from bipotential p2 progenitors during spinal cord neurogenesis, probably through DLL4-NOTCH signaling activation. Involved in the regulation of neuroendocrine cell development in the glandular stomach. The sequence is that of Achaete-scute homolog 1 from Mus musculus (Mouse).